The sequence spans 188 residues: ATP synthase subunit b 1 (188 aa).

A helical transmembrane segment spans residues 35 to 55 (VHFSSHFFWLAISFGFFYLFI).

It belongs to the ATPase B chain family. As to quaternary structure, F-type ATPases have 2 components, F(1) - the catalytic core - and F(0) - the membrane proton channel. F(1) has five subunits: alpha(3), beta(3), gamma(1), delta(1), epsilon(1). F(0) has three main subunits: a(1), b(2) and c(10-14). The alpha and beta chains form an alternating ring which encloses part of the gamma chain. F(1) is attached to F(0) by a central stalk formed by the gamma and epsilon chains, while a peripheral stalk is formed by the delta and b chains.

The protein resides in the cell inner membrane. Its function is as follows. F(1)F(0) ATP synthase produces ATP from ADP in the presence of a proton or sodium gradient. F-type ATPases consist of two structural domains, F(1) containing the extramembraneous catalytic core and F(0) containing the membrane proton channel, linked together by a central stalk and a peripheral stalk. During catalysis, ATP synthesis in the catalytic domain of F(1) is coupled via a rotary mechanism of the central stalk subunits to proton translocation. In terms of biological role, component of the F(0) channel, it forms part of the peripheral stalk, linking F(1) to F(0). The chain is ATP synthase subunit b 1 from Bartonella tribocorum (strain CIP 105476 / IBS 506).